Consider the following 622-residue polypeptide: Low affinity potassium transport system protein Kup (622 aa).

Helical transmembrane passes span 9–29, 49–69, 103–123, 137–157, 165–185, 213–233, 247–267, 276–296, 337–357, 363–383, 396–416, and 419–439; these read LPAITLAAIGVVYGDIGTSPL, VFGFLSLIFWLLIFVVSIKYL, VIMGLIGGSFFYGEVVITPAI, PQLDTWIVPLSIIVLTLLFMI, VGKLFAPIMLTWFLILAGLGL, VSFIALGAVVLSITGGEALYA, WFTVVLPSLTLNYFGQGALLL, PFFLLAPDWALIPLLIIAALA, IYIPFVNWMLYVAVVIVIVSF, LAAAYGIAVTGTMVLTSILST, FVALILIAFLCVDIPLFTANL, and LLSGGWLPLSLGTVMFIVMTT.

Belongs to the HAK/KUP transporter (TC 2.A.72) family.

Its subcellular location is the cell inner membrane. It carries out the reaction K(+)(in) + H(+)(in) = K(+)(out) + H(+)(out). Functionally, responsible for the low-affinity transport of potassium into the cell. Likely operates as a K(+):H(+) symporter. The sequence is that of Low affinity potassium transport system protein Kup from Shigella flexneri serotype 5b (strain 8401).